Consider the following 85-residue polypeptide: Sec-independent protein translocase protein TatA (85 aa).

Residues 1 to 21 traverse the membrane as a helical segment; it reads MGGISIWQLLIIALIVVLLFG. Residues 43–85 are disordered; that stretch reads MSSDEDKKALEDAEAAKSVQTAQTAQPTQQATEKKPESNKEQA. Positions 46 to 57 are enriched in basic and acidic residues; that stretch reads DEDKKALEDAEA. Over residues 58-73 the composition is skewed to low complexity; that stretch reads AKSVQTAQTAQPTQQA. Positions 74-85 are enriched in basic and acidic residues; that stretch reads TEKKPESNKEQA.

This sequence belongs to the TatA/E family. As to quaternary structure, the Tat system comprises two distinct complexes: a TatABC complex, containing multiple copies of TatA, TatB and TatC subunits, and a separate TatA complex, containing only TatA subunits. Substrates initially bind to the TatABC complex, which probably triggers association of the separate TatA complex to form the active translocon.

It localises to the cell inner membrane. Part of the twin-arginine translocation (Tat) system that transports large folded proteins containing a characteristic twin-arginine motif in their signal peptide across membranes. TatA could form the protein-conducting channel of the Tat system. In Shewanella sp. (strain ANA-3), this protein is Sec-independent protein translocase protein TatA.